The primary structure comprises 629 residues: MQKQTLSFQAEVAQLLKLVTHSLYSNPDIFLRELISNASDACDKLRFEALNDAGLYENDSELKVRVSFDKAAKTLTITDNGIGMSQQEAIEHLGTIAKSGTRDFVAKLSGDQKNDAQLIGQFGVGFYSGFIVADKITVESRRAGLPAAQGVRWVSEGTGEFDVSETLRAERGTSIILHLKDDAADYLNAWKLKGIINKYSDHISLPILMPKEEWKEGENDQPGEMAFTGEWETVNQAAALWTRPKKDITPEHYAEFYKQISYDSEAPLATTHNRVEGATEYTQLLFIPAKAPMDMYNRDKAAGVKLYVKRVFIMDDAQALLPTYLRFVKGVVDSSDLPLNVSRELLQESRAVKAIREGCTKRVLSMIEDLANNEPEKFKTFYAEFGAVLKEGLGEDFANRERLAKLLRFASSTTDTTTVSFADYKARMKDGQDAIYYITADTLAAAKSSPQLEIFRKKGIEVLLMADRVDEWALNYLNEFDGTPLQSVAKGAVDLGKLQDEDEKKAAEEAQTQFKPILDKLKEALKDKASDVRATSRLVDSPACLVVQDGDMSTQLARMLKQAGQTVPEVKPILEVNAQHPLVRKLEASSELASFDDLANILFDQALLAEGGMPTDPAAYVRRVNALLV.

The a; substrate-binding stretch occupies residues 1-343 (MQKQTLSFQA…SSDLPLNVSR (343 aa)). Residues 344 to 558 (ELLQESRAVK…DGDMSTQLAR (215 aa)) form a b region. Positions 559–629 (MLKQAGQTVP…YVRRVNALLV (71 aa)) are c.

Belongs to the heat shock protein 90 family. As to quaternary structure, homodimer.

The protein localises to the cytoplasm. Its function is as follows. Molecular chaperone. Has ATPase activity. This Polaromonas naphthalenivorans (strain CJ2) protein is Chaperone protein HtpG.